The chain runs to 322 residues: Cytochrome c biogenesis protein CcsA (322 aa).

The next 8 membrane-spanning stretches (helical) occupy residues 6-26 (LQLI…FLFF), 45-65 (LIAN…AGYF), 69-89 (NLYE…LFLY), 97-117 (LLDN…HFIL), 144-164 (MISY…LYFL), 230-250 (LITF…VWAN), 265-285 (WALI…IKGW), and 291-311 (AMVA…VNLL).

Belongs to the CcmF/CycK/Ccl1/NrfE/CcsA family. In terms of assembly, may interact with Ccs1.

Its subcellular location is the plastid. It localises to the cyanelle thylakoid membrane. Functionally, required during biogenesis of c-type cytochromes (cytochrome c6 and cytochrome f) at the step of heme attachment. The polypeptide is Cytochrome c biogenesis protein CcsA (Cyanophora paradoxa).